The sequence spans 164 residues: MALRYFSHLPEELKEKIMNEHLKEIKKKEFLENVIKAACAVFEGLTKKESVEEDDILRFSGFLEGLSAYYAEATKKKCLVRWKKSVAINLKWRVMEEMHYKLYGFADMEDLYCSELGFPNYGEDDVAYHDGAIVNCKQLEVVFDDLGIEFMSIVIDRGSIKIEL.

The tract at residues Leu-9–Leu-22 is binding to host SKP1 protein. An LXCXE motif, interaction with host RBR motif is present at residues Leu-111 to Glu-115.

It belongs to the nanovirus Clink protein family. Interacts with host SKP1. Interacts (via LXCXE domain) with host retinoblastoma-related protein 1 (RBR1). Interacts (via LXCXE domain) with retinoblastoma-related proteins (RBR).

Functionally, interacts with and disrupts the function of host retinoblastoma-related proteins RBR, which are key regulators of the cell cycle. Induces transcriptional activation of E2F-regulated S-phase and G2/M-phase-specific genes. Inactivation of the ability of RBR to arrest the cell cycle leads to the stimulation of viral DNA replication. The polypeptide is Cell cycle link protein (DNA-C) (Trifolium subterraneum (Subterranean clover)).